A 388-amino-acid polypeptide reads, in one-letter code: 3-oxo-tetronate kinase (388 aa).

ATP is bound by residues S258 and 360–363; that span reads GGET.

The protein belongs to the four-carbon acid sugar kinase family.

It carries out the reaction 3-dehydro-L-erythronate + ATP = 3-dehydro-4-O-phospho-L-erythronate + ADP + H(+). The catalysed reaction is 3-dehydro-D-erythronate + ATP = 3-dehydro-4-O-phospho-D-erythronate + ADP + H(+). Its function is as follows. Catalyzes the ATP-dependent phosphorylation of 3-oxo-tetronate to 3-oxo-tetronate 4-phosphate. This chain is 3-oxo-tetronate kinase, found in Escherichia coli (strain K12).